The chain runs to 878 residues: Bifunctional heparan sulfate N-deacetylase/N-sulfotransferase 1 (878 aa).

The Cytoplasmic segment spans residues 1-17; sequence MSLSLKTRRFGRPVRPQ. Residues 1–169 form a sufficient for localization to Golgi membrane region; that stretch reads MSLSLKTRRF…VEYGVGIIGF (169 aa). A helical; Signal-anchor for type II membrane protein membrane pass occupies residues 18–38; the sequence is LVLLLLFALCLLSVFISAYYL. Topologically, residues 39–878 are lumenal; sequence YGWKRGLEPS…WLREELQNTR (840 aa). The heparan sulfate N-deacetylase 1 stretch occupies residues 40–594; the sequence is GWKRGLEPSG…KRHKDIWSKE (555 aa). N-linked (GlcNAc...) asparagine glycosylation is found at asparagine 231, asparagine 347, and asparagine 397. Residues 595-878 form a heparan sulfate N-sulfotransferase 1 region; sequence KTCDRFPKLL…WLREELQNTR (284 aa). The active-site For sulfotransferase activity is lysine 610. Adenosine 3',5'-bisphosphate is bound at residue 610-614; it reads KTGTT. N-linked (GlcNAc...) asparagine glycosylation is present at asparagine 663. Adenosine 3',5'-bisphosphate-binding residues include serine 708 and tryptophan 813. Cysteine 814 and cysteine 824 are disulfide-bonded. 829-833 provides a ligand contact to adenosine 3',5'-bisphosphate; that stretch reads KGRKY.

It belongs to the sulfotransferase 1 family. NDST subfamily. Monomer.

The protein localises to the golgi apparatus membrane. It is found in the golgi apparatus. Its subcellular location is the trans-Golgi network membrane. It carries out the reaction alpha-D-glucosaminyl-[heparan sulfate](n) + 3'-phosphoadenylyl sulfate = N-sulfo-alpha-D-glucosaminyl-[heparan sulfate](n) + adenosine 3',5'-bisphosphate + 2 H(+). The protein operates within glycan metabolism; heparan sulfate biosynthesis. It participates in glycan metabolism; heparin biosynthesis. Its function is as follows. Essential bifunctional enzyme that catalyzes both the N-deacetylation and the N-sulfation of glucosamine (GlcNAc) of the glycosaminoglycan in heparan sulfate. Modifies the GlcNAc-GlcA disaccharide repeating sugar backbone to make N-sulfated heparosan, a prerequisite substrate for later modifications in heparin biosynthesis. Plays a role in determining the extent and pattern of sulfation of heparan sulfate. In Xenopus laevis (African clawed frog), this protein is Bifunctional heparan sulfate N-deacetylase/N-sulfotransferase 1 (ndst1).